The chain runs to 257 residues: Hydroxyethylthiazole kinase 1 (257 aa).

Methionine 41 is a substrate binding site. Residues lysine 117 and threonine 162 each coordinate ATP. Glycine 189 contributes to the substrate binding site.

The protein belongs to the Thz kinase family. Mg(2+) is required as a cofactor.

It catalyses the reaction 5-(2-hydroxyethyl)-4-methylthiazole + ATP = 4-methyl-5-(2-phosphooxyethyl)-thiazole + ADP + H(+). It participates in cofactor biosynthesis; thiamine diphosphate biosynthesis; 4-methyl-5-(2-phosphoethyl)-thiazole from 5-(2-hydroxyethyl)-4-methylthiazole: step 1/1. In terms of biological role, catalyzes the phosphorylation of the hydroxyl group of 4-methyl-5-beta-hydroxyethylthiazole (THZ). This chain is Hydroxyethylthiazole kinase 1, found in Oceanobacillus iheyensis (strain DSM 14371 / CIP 107618 / JCM 11309 / KCTC 3954 / HTE831).